The primary structure comprises 2173 residues: Mediator of RNA polymerase II transcription subunit 12 (2173 aa).

Disordered regions lie at residues 1-34 (MAAF…QKED), 318-345 (GGHQ…AGGN), 630-718 (ASNS…KGMD), 784-804 (KSTA…KPEA), 1380-1404 (MNSS…NSAS), 1443-1467 (ELEK…KSMS), 1737-1780 (EEEP…VKQE), and 2020-2068 (QGIH…FRPQ). Positions 702-717 (QAQEQESKSTAKDKGM) are enriched in basic and acidic residues. Positions 1389 to 1404 (GSAVSGSSVSNSNSAS) are enriched in low complexity. 2 stretches are compositionally biased toward basic and acidic residues: residues 1443–1462 (ELEK…DRQK) and 1747–1759 (EPDK…KVEK). Over residues 2034 to 2057 (QQQQQQQQQQQQQQQQQQVHQQQQ) the composition is skewed to low complexity.

This sequence belongs to the Mediator complex subunit 12 family. Component of the Mediator complex.

Its subcellular location is the nucleus. Its function is as follows. Component of the Mediator complex, a coactivator involved in regulated gene transcription of nearly all RNA polymerase II-dependent genes. Mediator functions as a bridge to convey information from gene-specific regulatory proteins to the basal RNA polymerase II transcription machinery. Mediator is recruited to promoters by direct interactions with regulatory proteins and serves as a scaffold for the assembly of a functional preinitiation complex with RNA polymerase II and the general transcription factors. Required for development of the body axis, brain, ear, kidney, forelimb and neural crest and for pigmentation. Acts as a coactivator for sox9a and/or sox9b promoting the expression of several neuronal determination genes. This Danio rerio (Zebrafish) protein is Mediator of RNA polymerase II transcription subunit 12 (med12).